Reading from the N-terminus, the 45-residue chain is Putative UPF0377 protein YJL222W-B (45 aa).

Belongs to the UPF0377 family.

The polypeptide is Putative UPF0377 protein YJL222W-B (Saccharomyces cerevisiae (strain ATCC 204508 / S288c) (Baker's yeast)).